The following is a 279-amino-acid chain: Dermonecrotic toxin LbSicTox-alphaIB1a (279 aa).

His11 is an active-site residue. Residues Glu31 and Asp33 each contribute to the Mg(2+) site. His47 serves as the catalytic Nucleophile. 2 disulfide bridges follow: Cys51–Cys57 and Cys53–Cys196. Position 91 (Asp91) interacts with Mg(2+).

The protein belongs to the arthropod phospholipase D family. Class II subfamily. Class IIa sub-subfamily. Mg(2+) is required as a cofactor. Expressed by the venom gland.

It is found in the secreted. The catalysed reaction is an N-(acyl)-sphingosylphosphocholine = an N-(acyl)-sphingosyl-1,3-cyclic phosphate + choline. It catalyses the reaction an N-(acyl)-sphingosylphosphoethanolamine = an N-(acyl)-sphingosyl-1,3-cyclic phosphate + ethanolamine. The enzyme catalyses a 1-acyl-sn-glycero-3-phosphocholine = a 1-acyl-sn-glycero-2,3-cyclic phosphate + choline. It carries out the reaction a 1-acyl-sn-glycero-3-phosphoethanolamine = a 1-acyl-sn-glycero-2,3-cyclic phosphate + ethanolamine. Functionally, dermonecrotic toxins cleave the phosphodiester linkage between the phosphate and headgroup of certain phospholipids (sphingolipid and lysolipid substrates), forming an alcohol (often choline) and a cyclic phosphate. This toxin acts on sphingomyelin (SM) with high activity (about 30.5-31.5 U/mg). It may also act on ceramide phosphoethanolamine (CPE), lysophosphatidylcholine (LPC) and lysophosphatidylethanolamine (LPE), but not on lysophosphatidylserine (LPS), and lysophosphatidylglycerol (LPG). It acts by transphosphatidylation, releasing exclusively cyclic phosphate products as second products. Induces dermonecrosis, hemolysis, increased vascular permeability, edema, inflammatory response, and platelet aggregation. Is lethal to mice. This chain is Dermonecrotic toxin LbSicTox-alphaIB1a, found in Loxosceles boneti (North American fiddleback spider).